The chain runs to 484 residues: Gasdermin-D (484 aa).

At Tyr37 the chain carries Phosphotyrosine. Position 56 is an S-(2-succinyl)cysteine (Cys56). 2 beta stranded membrane-spanning segments follow: residues Gln91–Ala97 and Lys103–Ala108. Position 158 is a phosphotyrosine (Tyr158). 2 beta stranded membrane-spanning segments follow: residues Gly180–Leu186 and Cys191–Gln197. Ser185 bears the Phosphoserine mark. Residues Cys191 and Cys268 each carry the S-(2-succinyl)cysteine modification. Cys191 is lipidated: S-palmitoyl cysteine. The segment at Val277 to Thr296 is linker helix loop. Residue Cys309 is modified to S-(2-succinyl)cysteine. O-linked (GlcNAc) serine glycosylation occurs at Ser338. Cys467 is modified (S-(2-succinyl)cysteine).

This sequence belongs to the gasdermin family. As to quaternary structure, homooligomer; homooligomeric ring-shaped pore complex containing 27-28 subunits when inserted in the membrane. Homooligomerization is promoted by the mTORC1 complex in macrophages. In response to a canonical inflammasome stimulus, such as nigericin, recruited to NLRP3 inflammasone with similar kinetics to that of uncleaved CASP1 precursor. Although this recruitment is also observed in the absence of PYCARD, it is more efficient in its presence. Post-translationally, cleavage at Asp-275 by CASP1 (mature and uncleaved precursor forms), CASP4, CASP5 or CASP8 relieves autoinhibition and is sufficient to initiate pyroptosis. Cleavage by CASP1 and CASP4 is not strictly dependent on the consensus cleavage site on GSDMD but depends on an exosite interface on CASP1 that recognizes and binds the Gasdermin-D, C-terminal (GSDMD-CT) part. Cleavage by CASP8 takes place following inactivation of MAP3K7/TAK1 by Yersinia toxin YopJ. Cleavage at Asp-87 by CASP3 or CASP7 inactivates the ability to mediate pyroptosis, but generates the Gasdermin-D, p13 chain, which translocates to the nucleus and acts as a transcription regulator. Cleavage by papain allergen generates the Gasdermin-D, p40 chain. Palmitoylated at Cys-191 by ZDHHC5 and ZDHHC9 in response to microbial infection and danger signals. Palmitoylation takes place before cleavage by caspases (CASP1, CASP4, CASP5 or CASP8) and is required for membrane translocation and pore formation. Depalmitoylated by LYPLA2. In terms of processing, succination of Cys-191 by the Krebs cycle intermediate fumarate, which leads to S-(2-succinyl)cysteine residues, inhibits processing by caspases, and ability to initiate pyroptosis. Succination modification is catalyzed by a non-enzymatic reaction caused by an accumulation of fumarate. Post-translationally, glycosylated: O-GlcNAcylation by OGT leads to reduced cleavage by CASP4 and decreased LPS-induced endothelial cell pyroptosis. (Microbial infection) Cleaved and inactivated by Protease 3C from Human enterovirus 71 (EV71), preventing GSDMD-mediated pyroptosis. In terms of processing, (Microbial infection) Cleaved and inactivated by the 3C-like proteinase nsp5 from human coronavirus SARS-CoV-2, preventing GSDMD-mediated pyroptosis. Post-translationally, (Microbial infection) Ubiquitinated by S.flexneri IpaH7.8, leading to its degradation by the proteasome. As to expression, expressed in the suprabasal cells of esophagus, as well as in the isthmus/neck, pit, and gland of the stomach, suggesting preferential expression in differentiating cells.

Its subcellular location is the cytoplasm. The protein resides in the cytosol. It is found in the inflammasome. The protein localises to the cell membrane. It localises to the secreted. Its subcellular location is the mitochondrion membrane. The protein resides in the nucleus. The full-length protein before cleavage is inactive: intramolecular interactions between N- and C-terminal domains mediate autoinhibition in the absence of activation signal. The intrinsic pyroptosis-inducing activity is carried by the released N-terminal moiety (Gasdermin-D, N-terminal) following cleavage by caspases CASP1, CASP4, CASP5 or CASP8. Cleavage at Asp-87 by CASP3 or CASP7 inactivates the ability to mediate pyroptosis. Homooligomerization and pore formation is specifically inhibited by VHH(GSDMD-1) and, to a lesser extent, VHH(GSDMD-2) nanobodies, protecting against excessive pyroptosis. Inhibited by small molecule NU6300, which covalently reacts with Cys-191, thereby preventing palmitoylation and pyroptosis. In terms of biological role, precursor of a pore-forming protein that plays a key role in host defense against pathogen infection and danger signals. This form constitutes the precursor of the pore-forming protein: upon cleavage, the released N-terminal moiety (Gasdermin-D, N-terminal) binds to membranes and forms pores, triggering pyroptosis. Its function is as follows. Promotes pyroptosis in response to microbial infection and danger signals. Produced by the cleavage of gasdermin-D by inflammatory caspases CASP1, CASP4 or CASP5 in response to canonical, as well as non-canonical (such as cytosolic LPS) inflammasome activators. After cleavage, moves to the plasma membrane where it strongly binds to inner leaflet lipids, including monophosphorylated phosphatidylinositols, such as phosphatidylinositol 4-phosphate, bisphosphorylated phosphatidylinositols, such as phosphatidylinositol (4,5)-bisphosphate, as well as phosphatidylinositol (3,4,5)-bisphosphate, and more weakly to phosphatidic acid and phosphatidylserine. Homooligomerizes within the membrane and forms pores of 10-15 nanometers (nm) of inner diameter, allowing the release of mature interleukin-1 (IL1B and IL18) and triggering pyroptosis. Gasdermin pores also allow the release of mature caspase-7 (CASP7). In some, but not all, cells types, pyroptosis is followed by pyroptotic cell death, which is caused by downstream activation of ninjurin-1 (NINJ1), which mediates membrane rupture (cytolysis). Also forms pores in the mitochondrial membrane, resulting in release of mitochondrial DNA (mtDNA) into the cytosol. Gasdermin-D, N-terminal released from pyroptotic cells into the extracellular milieu rapidly binds to and kills both Gram-negative and Gram-positive bacteria, without harming neighboring mammalian cells, as it does not disrupt the plasma membrane from the outside due to lipid-binding specificity. Under cell culture conditions, also active against intracellular bacteria, such as Listeria monocytogenes. Also active in response to MAP3K7/TAK1 inactivation by Yersinia toxin YopJ, which triggers cleavage by CASP8 and subsequent activation. Required for mucosal tissue defense against enteric pathogens. Activation of the non-canonical inflammasome in brain endothelial cells can lead to excessive pyroptosis, leading to blood-brain barrier breakdown. Strongly binds to bacterial and mitochondrial lipids, including cardiolipin. Does not bind to unphosphorylated phosphatidylinositol, phosphatidylethanolamine nor phosphatidylcholine. Functionally, transcription coactivator produced by the cleavage by CASP3 or CASP7 in the upper small intestine in response to dietary antigens. Required to maintain food tolerance in small intestine: translocates to the nucleus and acts as a coactivator for STAT1 to induce the transcription of CIITA and MHC class II molecules, which in turn induce type 1 regulatory T (Tr1) cells in upper small intestine. Produced by the cleavage by papain allergen. After cleavage, moves to the plasma membrane and homooligomerizes within the membrane and forms pores of 10-15 nanometers (nm) of inner diameter, allowing the specific release of mature interleukin-33 (IL33), promoting type 2 inflammatory immune response. This is Gasdermin-D from Homo sapiens (Human).